A 206-amino-acid chain; its full sequence is GDT1-like protein sll0615 (206 aa).

The next 5 membrane-spanning stretches (helical) occupy residues 36 to 56, 58 to 78, 114 to 134, 151 to 171, and 185 to 205; these read WVLV…VLMG, IFTF…FLIF, IVPR…VAEW, AWGV…IAVM, and VTLI…WTKI.

The protein belongs to the GDT1 family.

It localises to the cell membrane. The polypeptide is GDT1-like protein sll0615 (Synechocystis sp. (strain ATCC 27184 / PCC 6803 / Kazusa)).